Consider the following 525-residue polypeptide: GMP synthase [glutamine-hydrolyzing] (525 aa).

One can recognise a Glutamine amidotransferase type-1 domain in the interval Arg9–Leu207. Catalysis depends on Cys86, which acts as the Nucleophile. Catalysis depends on residues His181 and Glu183. Positions Trp208–Arg400 constitute a GMPS ATP-PPase domain. Ser235 to Ser241 provides a ligand contact to ATP.

In terms of assembly, homodimer.

The enzyme catalyses XMP + L-glutamine + ATP + H2O = GMP + L-glutamate + AMP + diphosphate + 2 H(+). It functions in the pathway purine metabolism; GMP biosynthesis; GMP from XMP (L-Gln route): step 1/1. In terms of biological role, catalyzes the synthesis of GMP from XMP. This Enterobacter sp. (strain 638) protein is GMP synthase [glutamine-hydrolyzing].